We begin with the raw amino-acid sequence, 206 residues long: Ribosomal RNA large subunit methyltransferase E (206 aa).

S-adenosyl-L-methionine contacts are provided by Gly60, Trp62, Asp80, Asp96, and Asp121. Lys161 functions as the Proton acceptor in the catalytic mechanism.

It belongs to the class I-like SAM-binding methyltransferase superfamily. RNA methyltransferase RlmE family.

The protein localises to the cytoplasm. The catalysed reaction is uridine(2552) in 23S rRNA + S-adenosyl-L-methionine = 2'-O-methyluridine(2552) in 23S rRNA + S-adenosyl-L-homocysteine + H(+). Specifically methylates the uridine in position 2552 of 23S rRNA at the 2'-O position of the ribose in the fully assembled 50S ribosomal subunit. The protein is Ribosomal RNA large subunit methyltransferase E of Francisella tularensis subsp. holarctica (strain FTNF002-00 / FTA).